The sequence spans 2003 residues: Histone acetyltransferase KAT6A (2003 aa).

An SAMD1-like winged helix (WH) domain is found at 1–77; the sequence is MVKLANPLYT…LNSYKDPDNP (77 aa). Positions 1-144 are required for activation of RUNX1-1; sequence MVKLANPLYT…CGGSAAPGFH (144 aa). The interval 52–166 is required for nuclear localization; that stretch reads ELSVKDGTIL…HGRLLKDGPL (115 aa). An H15 domain is found at 95–171; that stretch reads QSVDWNKLLK…KDGPLYRLNT (77 aa). Residues 144-663 form an interaction with PML region; it reads HQQLRLAIKR…RKGYGRFLID (520 aa). An N6-acetyllysine modification is found at K172. PHD-type zinc fingers lie at residues 206 to 265 and 262 to 313; these read IPIC…CKTC and CKTC…CRPR. The segment at 312–663 is interaction with RUNX1-1; sequence PRKKGRKLLQ…RKGYGRFLID (352 aa). The segment at 336-377 is disordered; sequence GRPKNRLKKQNTVSKGPFSKVRTGPGRGRKRKITVSSQSASS. Residues K350 and K355 each carry the N6-acetyllysine modification. Phosphothreonine; by PKB/AKT1 is present on T369. S419 bears the Phosphoserine mark. Positions 439–466 are disordered; that stretch reads RKKGNRKSSTSDWPTDNQDGWESKQENE. The segment covering 445-458 has biased composition (polar residues); sequence KSSTSDWPTDNQDG. S472 is modified (phosphoserine). Residues 487–777 are catalytic; that stretch reads IQEQALQKVG…VDPECLRWTP (291 aa). In terms of domain architecture, MYST-type HAT spans 503 to 777; the sequence is PQVRCPSVIE…VDPECLRWTP (275 aa). The segment at 506–809 is mediates interaction with BRPF1, required for histone H3 acetyltransferase activity; sequence RCPSVIEFGK…EPQGQERELE (304 aa). Residues 536–561 form a C2HC MYST-type zinc finger; the sequence is LYLCEFCLKYMKSRTILQQHMKKCGW. K603 bears the N6-acetyllysine; by autocatalysis mark. Acetyl-CoA contacts are provided by residues 644 to 648 and 653 to 659; these read SCIMI and QRKGYGR. E679 acts as the Proton donor/acceptor in catalysis. Residue S683 coordinates acetyl-CoA. The segment at 784–939 is disordered; it reads VVSEDEDEEA…DGKPDIPKGR (156 aa). S786 bears the Phosphoserine mark. Residues 786–798 are compositionally biased toward acidic residues; it reads SEDEDEEADEGEK. Residues 799-841 are compositionally biased toward basic and acidic residues; sequence EEPQGQERELETRVKVGKSVSREKKDQESSSLIETDKKPEVKE. N6-acetyllysine occurs at positions 813 and 816. K836 is covalently cross-linked (Glycyl lysine isopeptide (Lys-Gly) (interchain with G-Cter in SUMO2)). The segment covering 866–875 has biased composition (basic residues); it reads RRGRCGRKNR. A compositionally biased stretch (basic and acidic residues) spans 876–890; that stretch reads KTQERFGDKDSKMLV. A Phosphotyrosine modification is found at Y901. The segment covering 904 to 917 has biased composition (basic and acidic residues); sequence CEEKSETSQERFTE. A phosphoserine mark is found at S941 and S954. The tract at residues 983 to 1083 is disordered; that stretch reads GFSESSEEEE…EEEESELFPR (101 aa). K1007 is modified (N6-acetyllysine). Residues 1009-1030 are compositionally biased toward basic residues; it reads TLKRKKPILHRRRRVRKRKHHN. Over residues 1031–1042 the composition is skewed to low complexity; sequence SSVVTETISETT. 2 stretches are compositionally biased toward acidic residues: residues 1043 to 1053 and 1065 to 1079; these read EVLDEPFEDSD and FEME…EESE. Phosphoserine is present on residues S1090, S1091, and S1115. Disordered stretches follow at residues 1096-1174, 1197-1438, 1455-1533, 1546-1568, and 1631-1707; these read RCQS…RKPG, IKPG…GAYQ, HTDE…PSVS, DLGS…STMG, and TCVV…CSMN. Positions 1107-1120 are enriched in acidic residues; it reads EEEEEEEESDDADD. The span at 1136–1147 shows a compositional bias: polar residues; it reads NSASLEPDTSTP. Basic residues predominate over residues 1148-1174; the sequence is MKKKKGWPKGKSRKPIHWKKRPGRKPG. The span at 1204 to 1229 shows a compositional bias: basic and acidic residues; sequence RTQENEEIVEVKEDLLEERKEEMHTE. Acidic residues-rich tracts occupy residues 1230-1241 and 1282-1299; these read PDEEAEEEEDTT and EEPQ…DEVT. Basic and acidic residues predominate over residues 1317–1334; it reads HLDSLKTKEPEEQPARED. K1336 participates in a covalent cross-link: Glycyl lysine isopeptide (Lys-Gly) (interchain with G-Cter in SUMO2). 2 stretches are compositionally biased toward basic and acidic residues: residues 1352-1361 and 1393-1414; these read DSRENTKDKD and DSNT…HSEL. Residues 1473 to 1490 are compositionally biased toward low complexity; it reads HNSPISSIPSHPSQSVRS. 2 stretches are compositionally biased toward polar residues: residues 1502-1523 and 1550-1568; these read GYTQ…NMET and IEST…STMG. Positions 1511–1636 are interaction with RUNX1-2; sequence GSLSAPSMQN…KSPQTCVVER (126 aa). The segment at 1511-1740 is interaction with PML; that stretch reads GSLSAPSMQN…YERIPGDFGA (230 aa). Composition is skewed to pro residues over residues 1640–1673 and 1682–1698; these read NQQP…PPQP and QPPP…PQQQ. The required for activation of RUNX1-2 stretch occupies residues 1912-1947; the sequence is SMNMNTLNAMNSYRMTQPMMNSSYHSNPAYMNQTAQ.

Belongs to the MYST (SAS/MOZ) family. As to quaternary structure, component of the MOZ/MORF complex composed at least of ING5, KAT6A, KAT6B, MEAF6 and one of BRPF1, BRD1/BRPF2 and BRPF3. Interacts with RUNX2. Interacts with RUNX1; phosphorylation of RUNX1 enhances the interaction. Interacts with p53/TP53. Interacts with PML and this interaction positively regulates its acetylation activity towards p53/TP53. Post-translationally, autoacetylated. Autoacetylation at Lys-603 is required for proper function. In terms of processing, phosphorylation at Thr-369 by PKB/AKT1 inhibits its interaction with PML and negatively regulates its acetylation activity towards p53/TP53.

The protein resides in the nucleus. It is found in the nucleolus. The protein localises to the nucleoplasm. Its subcellular location is the PML body. It catalyses the reaction L-lysyl-[protein] + acetyl-CoA = N(6)-acetyl-L-lysyl-[protein] + CoA + H(+). Its function is as follows. Histone acetyltransferase that acetylates lysine residues in histone H3 and histone H4 (in vitro). Component of the MOZ/MORF complex which has a histone H3 acetyltransferase activity. May act as a transcriptional coactivator for RUNX1 and RUNX2. Acetylates p53/TP53 at 'Lys-120' and 'Lys-382' and controls its transcriptional activity via association with PML. The polypeptide is Histone acetyltransferase KAT6A (Kat6a) (Mus musculus (Mouse)).